The sequence spans 551 residues: Cytochrome P450 monooxygenase abl5 (551 aa).

A glycan (N-linked (GlcNAc...) asparagine) is linked at asparagine 24. Residues 37-57 (VVLNTLTAIVVVWICYRAVIY) form a helical membrane-spanning segment. N-linked (GlcNAc...) asparagine glycosylation is found at asparagine 174, asparagine 218, asparagine 283, asparagine 307, and asparagine 441. Cysteine 495 provides a ligand contact to heme.

The protein belongs to the cytochrome P450 family. The cofactor is heme.

The protein resides in the membrane. In terms of biological role, cytochrome P450 monooxygenase; part of the gene cluster that mediates the biosynthesis of abscisic acid (ABA), a phytohormone that acts antagonistically toward salicylic acid (SA), jasmonic acid (JA) and ethylene (ETH) signaling, to impede plant defense responses. The first step of the pathway catalyzes the reaction from farnesyl diphosphate to alpha-ionylideneethane performed by the alpha-ionylideneethane synthase abl3 via a three-step reaction mechanism involving 2 neutral intermediates, beta-farnesene and allofarnesene. The cytochrome P450 monooxygenase abl1 might then be involved in the conversion of alpha-ionylideneethane to alpha-ionylideneacetic acid. Alpha-ionylideneacetic acid is further converted to abscisic acid in 2 steps involving the cytochrome P450 monooxygenase abl2 and the short-chain dehydrogenase/reductase abl4, via the intermediates 1'-deoxy-ABA or 1',4'-trans-diol-ABA, depending on the order of action of these 2 enzymes. Abl2 is responsible for the hydroxylation of carbon atom C-1' and abl4 might be involved in the oxidation of the C-4' carbon atom. The cytochrome monooxygenase abl5 seems not essential for the biosynthesis of ABA and its function remains to be identified. The polypeptide is Cytochrome P450 monooxygenase abl5 (Leptosphaeria maculans (strain JN3 / isolate v23.1.3 / race Av1-4-5-6-7-8) (Blackleg fungus)).